Reading from the N-terminus, the 745-residue chain is Protein transport protein SEC23 D (745 aa).

The Zn(2+) site is built by Cys53, Cys56, Cys73, and Cys76. A zinc finger-like region spans residues 53 to 76 (CENCYAYFNTYCELDQWAWNCSLC).

It belongs to the SEC23/SEC24 family. SEC24 subfamily. In terms of assembly, component of the coat protein complex II (COPII), composed of at least five proteins: the Sec23/24 complex, the Sec13/31 complex and Sar1. Mostly expressed in closed floral bud, pollen and flowers, and, to a lower extent, in mature siliques, roots and leaf primordia.

The protein localises to the cytoplasmic vesicle. It localises to the COPII-coated vesicle membrane. It is found in the endoplasmic reticulum membrane. The protein resides in the membrane. Component of the coat protein complex II (COPII) which promotes the formation of transport vesicles from the endoplasmic reticulum (ER). The coat has two main functions, the physical deformation of the endoplasmic reticulum membrane into vesicles and the selection of cargo molecules. May contribute to COPII-coated vesicles formation and ER-Golgi vesicle transport. Together with SEC23A, essential for pollen wall development and exine patterning, probably by regulating endoplasmic reticulum (ER) export of lipids and proteins (e.g. sporopollenin) necessary for pollen wall formation. Also involved in plastid physiology in anther tapetal cells. This is Protein transport protein SEC23 D from Arabidopsis thaliana (Mouse-ear cress).